The primary structure comprises 115 residues: UPF0102 protein NMCC_2054 (115 aa).

The protein belongs to the UPF0102 family.

This is UPF0102 protein NMCC_2054 from Neisseria meningitidis serogroup C (strain 053442).